The sequence spans 361 residues: Probable dual-specificity RNA methyltransferase RlmN (361 aa).

The active-site Proton acceptor is Glu91. The region spanning 97–335 is the Radical SAM core domain; the sequence is QHYGLSVCVT…CVVRQEHGTD (239 aa). An intrachain disulfide couples Cys104 to Cys340. Positions 111, 115, and 118 each coordinate [4Fe-4S] cluster. S-adenosyl-L-methionine contacts are provided by residues 163–164, Ser195, 218–220, and Asn296; these read GE and SLH. Cys340 functions as the S-methylcysteine intermediate in the catalytic mechanism.

The protein belongs to the radical SAM superfamily. RlmN family. The cofactor is [4Fe-4S] cluster.

Its subcellular location is the cytoplasm. The catalysed reaction is adenosine(2503) in 23S rRNA + 2 reduced [2Fe-2S]-[ferredoxin] + 2 S-adenosyl-L-methionine = 2-methyladenosine(2503) in 23S rRNA + 5'-deoxyadenosine + L-methionine + 2 oxidized [2Fe-2S]-[ferredoxin] + S-adenosyl-L-homocysteine. It carries out the reaction adenosine(37) in tRNA + 2 reduced [2Fe-2S]-[ferredoxin] + 2 S-adenosyl-L-methionine = 2-methyladenosine(37) in tRNA + 5'-deoxyadenosine + L-methionine + 2 oxidized [2Fe-2S]-[ferredoxin] + S-adenosyl-L-homocysteine. Its function is as follows. Specifically methylates position 2 of adenine 2503 in 23S rRNA and position 2 of adenine 37 in tRNAs. This Streptococcus mutans serotype c (strain ATCC 700610 / UA159) protein is Probable dual-specificity RNA methyltransferase RlmN.